Here is a 483-residue protein sequence, read N- to C-terminus: Regulatory protein ViaA (483 aa).

The protein belongs to the ViaA family. As to quaternary structure, homodimer. Interacts with RavA.

The protein resides in the cytoplasm. In terms of biological role, component of the RavA-ViaA chaperone complex, which may act on the membrane to optimize the function of some of the respiratory chains. ViaA stimulates the ATPase activity of RavA. The protein is Regulatory protein ViaA of Cronobacter sakazakii (strain ATCC BAA-894) (Enterobacter sakazakii).